Consider the following 215-residue polypeptide: Golgi-associated RAB2 interactor protein 5A (215 aa).

Disordered stretches follow at residues 1–20 and 174–215; these read MKRGHEPKPAFGGAGEAGPG and QDYS…LWGL. Over residues 178–191 the composition is skewed to acidic residues; the sequence is ALEDDEDDDEDEDR.

Belongs to the GARIN family. In terms of assembly, interacts (via N-terminus) with RAB2B (in GTP-bound form).

It localises to the golgi apparatus. Functionally, RAB2B effector protein which promotes cytosolic DNA-induced innate immune responses. Regulates IFN responses against DNA viruses by regulating the CGAS-STING signaling axis. The protein is Golgi-associated RAB2 interactor protein 5A (GARIN5A) of Bos taurus (Bovine).